A 366-amino-acid chain; its full sequence is uncharacterized protein (366 aa).

Transmembrane regions (helical) follow at residues Phe-30–Ile-50, Ile-66–Ile-86, Ile-136–Ala-156, Ile-162–Leu-182, Ile-198–Ile-218, and Tyr-225–Val-245.

It localises to the cell membrane. This is an uncharacterized protein from Methanocaldococcus jannaschii (strain ATCC 43067 / DSM 2661 / JAL-1 / JCM 10045 / NBRC 100440) (Methanococcus jannaschii).